We begin with the raw amino-acid sequence, 39 residues long: Phosphate starvation-inducible protein 1 (39 aa).

It localises to the cell outer membrane. The chain is Phosphate starvation-inducible protein 1 from Pseudomonas fluorescens.